Here is an 878-residue protein sequence, read N- to C-terminus: Valine--tRNA ligase (878 aa).

The short motif at 45-55 is the 'HIGH' region element; that stretch reads PNVTGQLHMGH. A 'KMSKS' region motif is present at residues 524-528; the sequence is KMSKS. An ATP-binding site is contributed by Lys527. Residues 804 to 871 are a coiled coil; the sequence is PLKDLIDLEK…REKEVLEQRI (68 aa).

This sequence belongs to the class-I aminoacyl-tRNA synthetase family. ValS type 1 subfamily. Monomer.

It is found in the cytoplasm. The catalysed reaction is tRNA(Val) + L-valine + ATP = L-valyl-tRNA(Val) + AMP + diphosphate. Its function is as follows. Catalyzes the attachment of valine to tRNA(Val). As ValRS can inadvertently accommodate and process structurally similar amino acids such as threonine, to avoid such errors, it has a 'posttransfer' editing activity that hydrolyzes mischarged Thr-tRNA(Val) in a tRNA-dependent manner. The polypeptide is Valine--tRNA ligase (Carboxydothermus hydrogenoformans (strain ATCC BAA-161 / DSM 6008 / Z-2901)).